The chain runs to 220 residues: Translation initiation factor IF-3 (220 aa).

The segment at 182-220 (TPLVKKDDKEEPATRAVRTITAPPRPTSARLASKPAGNG) is disordered. The span at 185–194 (VKKDDKEEPA) shows a compositional bias: basic and acidic residues.

It belongs to the IF-3 family. As to quaternary structure, monomer.

It localises to the cytoplasm. Its function is as follows. IF-3 binds to the 30S ribosomal subunit and shifts the equilibrium between 70S ribosomes and their 50S and 30S subunits in favor of the free subunits, thus enhancing the availability of 30S subunits on which protein synthesis initiation begins. This Synechococcus sp. (strain WH7803) protein is Translation initiation factor IF-3.